A 145-amino-acid chain; its full sequence is Leptin (145 aa).

C95 and C145 are oxidised to a cystine.

Belongs to the leptin family.

Its subcellular location is the secreted. Functionally, key player in the regulation of energy balance and body weight control. Once released into the circulation, has central and peripheral effects by binding LEPR, found in many tissues, which results in the activation of several major signaling pathways. This chain is Leptin (LEP), found in Meleagris gallopavo (Wild turkey).